The following is a 242-amino-acid chain: 1-(5-phosphoribosyl)-5-[(5-phosphoribosylamino)methylideneamino] imidazole-4-carboxamide isomerase (242 aa).

Catalysis depends on aspartate 10, which acts as the Proton acceptor. The active-site Proton donor is the aspartate 131.

Belongs to the HisA/HisF family.

It is found in the cytoplasm. It catalyses the reaction 1-(5-phospho-beta-D-ribosyl)-5-[(5-phospho-beta-D-ribosylamino)methylideneamino]imidazole-4-carboxamide = 5-[(5-phospho-1-deoxy-D-ribulos-1-ylimino)methylamino]-1-(5-phospho-beta-D-ribosyl)imidazole-4-carboxamide. The protein operates within amino-acid biosynthesis; L-histidine biosynthesis; L-histidine from 5-phospho-alpha-D-ribose 1-diphosphate: step 4/9. The polypeptide is 1-(5-phosphoribosyl)-5-[(5-phosphoribosylamino)methylideneamino] imidazole-4-carboxamide isomerase (Granulibacter bethesdensis (strain ATCC BAA-1260 / CGDNIH1)).